We begin with the raw amino-acid sequence, 130 residues long: Sec-independent protein translocase protein TatB (130 aa).

The helical transmembrane segment at 2–22 (FANIGWGEMLVLVVVGLVVLG) threads the bilayer. Residues 108 to 130 (DAVASAQEAPDEPVRPPFDSDAT) form a disordered region.

The protein belongs to the TatB family. In terms of assembly, the Tat system comprises two distinct complexes: a TatABC complex, containing multiple copies of TatA, TatB and TatC subunits, and a separate TatA complex, containing only TatA subunits. Substrates initially bind to the TatABC complex, which probably triggers association of the separate TatA complex to form the active translocon.

The protein localises to the cell membrane. Functionally, part of the twin-arginine translocation (Tat) system that transports large folded proteins containing a characteristic twin-arginine motif in their signal peptide across membranes. Together with TatC, TatB is part of a receptor directly interacting with Tat signal peptides. TatB may form an oligomeric binding site that transiently accommodates folded Tat precursor proteins before their translocation. This is Sec-independent protein translocase protein TatB from Mycobacterium ulcerans (strain Agy99).